Here is a 409-residue protein sequence, read N- to C-terminus: Pleckstrin homology domain-containing family O member 1 (409 aa).

Positions 1-20 (MMKKNNSTKRGPQDGNHQCA) are disordered. The region spanning 21–132 (PPEKVGWVRK…WINALNSAIT (112 aa)) is the PH domain. Positions 133-193 (RAKNRVLDEV…MLTLDLIQEE (61 aa)) are interaction with capping proteins (CPs). Positions 136–308 (NRVLDEVTVE…PHAPGQLSRI (173 aa)) are interaction with ATM, CKIP, IFP35 and NMI. 3 disordered regions span residues 218–304 (LAGS…APGQ), 325–350 (EVQGLGDGKRKAKEPPRSPPDSESEQ), and 390–409 (TPDSHLRQTTQHSQYRKSLM). Residues S227 and S271 each carry the phosphoserine modification. The tract at residues 308 to 409 (IQDLVARKLE…QHSQYRKSLM (102 aa)) is negative regulator of AP-1 activity. The segment covering 331-340 (DGKRKAKEPP) has biased composition (basic and acidic residues). At S342 the chain carries Phosphoserine. Residues 390-402 (TPDSHLRQTTQHS) are compositionally biased toward polar residues.

As to quaternary structure, heterodimer or homodimer. Interacts with CK2 and actin capping subunits (capping protein CP-alpha and CP-beta). CKIP1 and CK2 together inhibit the activity of actin capping protein at the barbed ends of actin filaments. Interacts with ATM, IFP35, JUN, JUND, NMI and PI3K. Interacts with AKT1, AKT2 and AKT3 (each isozyme of PKB), PtdIns(3,5)P2, PtdIns(4,5)P2 and PtdIns(3,4,5)P2. C-terminal fragments could be released during apoptosis via caspase-3-dependent cleavage.

The protein resides in the membrane. Its subcellular location is the nucleus. The protein localises to the cytoplasm. Plays a role in the regulation of the actin cytoskeleton through its interactions with actin capping protein (CP). May function to target CK2 to the plasma membrane thereby serving as an adapter to facilitate the phosphorylation of CP by protein kinase 2 (CK2). Appears to target ATM to the plasma membrane. Also implicated in PI3K-regulated muscle differentiation, the regulation of AP-1 activity (plasma membrane bound AP-1 regulator that translocates to the nucleus) and the promotion of apoptosis induced by tumor necrosis factor TNF. When bound to PKB, it inhibits it probably by decreasing PKB level of phosphorylation. The chain is Pleckstrin homology domain-containing family O member 1 (PLEKHO1) from Bos taurus (Bovine).